The chain runs to 203 residues: Glycerol-3-phosphate acyltransferase (203 aa).

Transmembrane regions (helical) follow at residues 6-26, 82-102, 118-138, and 141-161; these read LTLL…AVLV, AISL…PIFF, APIG…LVLI, and YSSL…WWLD.

The protein belongs to the PlsY family. In terms of assembly, probably interacts with PlsX.

Its subcellular location is the cell inner membrane. The catalysed reaction is an acyl phosphate + sn-glycerol 3-phosphate = a 1-acyl-sn-glycero-3-phosphate + phosphate. Its pathway is lipid metabolism; phospholipid metabolism. Its function is as follows. Catalyzes the transfer of an acyl group from acyl-phosphate (acyl-PO(4)) to glycerol-3-phosphate (G3P) to form lysophosphatidic acid (LPA). This enzyme utilizes acyl-phosphate as fatty acyl donor, but not acyl-CoA or acyl-ACP. The polypeptide is Glycerol-3-phosphate acyltransferase (Shewanella sp. (strain MR-7)).